We begin with the raw amino-acid sequence, 228 residues long: Vesicle transport protein SEC20 (228 aa).

Topologically, residues 1–199 are cytoplasmic; that stretch reads MAAPQDVHVR…LITKYNRREL (199 aa). The stretch at 37–90 forms a coiled coil; sequence LSALTELNTKVKEKFQQLRHRIQDLEQLAKEQDKESEKQLLLQEVENHKKQMLS. The helical; Anchor for type IV membrane protein transmembrane segment at 200–220 threads the bilayer; sequence TDKLLIFLALALFLATVLYIV. The Lumenal segment spans residues 221–228; it reads KKRLFPFL.

Belongs to the SEC20 family. Component of a SNARE complex consisting of STX18, USE1L, BNIP1/SEC20L and SEC22B. Interacts directly with STX18, RINT1/TIP20L and NAPA. Interacts with ZW10 through RINT1. Interacts with BCL2. Interacts with RNF186. Interacts with RNF185. Interacts with SQSTM1; increased by 'Lys-63'-linked polyubiquitination of BNIP1. As to quaternary structure, (Microbial infection) Interacts with adenovirus E1B 19K protein; plays a role in the suppression of cell apoptosis by the viral protein. Polyubiquitinated. 'Lys-63'-linked polyubiquitination by RNF185 increases the interaction with the autophagy receptor SQSTM1. Undergoes 'Lys-29'- and 'Lys-63'-linked polyubiquitination by RNF186 that may regulate BNIP1 localization to the mitochondrion. In terms of tissue distribution, isoform 1 is highly expressed in heart, brain, liver skeletal muscle and pancreas. Isoform 3 is moderately expressed in placenta, lung and kidney. Isoform 4 is highly expressed in testis and small intestine.

Its subcellular location is the endoplasmic reticulum membrane. It is found in the mitochondrion membrane. Its function is as follows. As part of a SNARE complex may be involved in endoplasmic reticulum membranes fusion and be required for the maintenance of endoplasmic reticulum organization. Also plays a role in apoptosis. It is for instance required for endoplasmic reticulum stress-induced apoptosis. As a substrate of RNF185 interacting with SQSTM1, might also be involved in mitochondrial autophagy. The protein is Vesicle transport protein SEC20 (BNIP1) of Homo sapiens (Human).